The sequence spans 433 residues: Putative ankyrin repeat protein R784 (433 aa).

ANK repeat units lie at residues 44 to 70 (NQNLVLECAIEVDNIYIINKLIDKTDV), 71 to 101 (NGLKFVMRWSALHGSFQIIKSIIRKDHNNDL), 102 to 131 (LDLHAINWSIESNHLHISKYLIDKYNIVII), 179 to 205 (FYDSMIELACLYGHVHVVQYFIDNQCS), 206 to 235 (VRQKWLYYSCLSGNFDLVKLLCKNGCRIFS), 237 to 264 (RRLINTAITGGNLDIVRYCLLHSKIDLA), 265 to 294 (QNNFAMKIAIKTGHIGIVRLLVSHGSDIHF), 296 to 321 (NGECMIIASRGGFANIVKFFLENKVY), 322 to 351 (MSEKVLKIAAIRGYLDIIKVFIKYASACMS), and 380 to 409 (NMRKILIWSLINNRINIVTYLLEIFPKLRE).

The sequence is that of Putative ankyrin repeat protein R784 from Acanthamoeba polyphaga mimivirus (APMV).